We begin with the raw amino-acid sequence, 271 residues long: Probable septum site-determining protein MinC (271 aa).

Positions 106 to 125 (RRAPSPKAADDAPAQPEEPR) are disordered. Residues 110-119 (SPKAADDAPA) are compositionally biased toward low complexity.

This sequence belongs to the MinC family. As to quaternary structure, interacts with MinD and FtsZ.

Cell division inhibitor that blocks the formation of polar Z ring septums. Rapidly oscillates between the poles of the cell to destabilize FtsZ filaments that have formed before they mature into polar Z rings. Prevents FtsZ polymerization. In Burkholderia thailandensis (strain ATCC 700388 / DSM 13276 / CCUG 48851 / CIP 106301 / E264), this protein is Probable septum site-determining protein MinC.